A 230-amino-acid chain; its full sequence is 5'-methylthioadenosine/S-adenosylhomocysteine nucleosidase (230 aa).

Glu-12 acts as the Proton acceptor in catalysis. Substrate-binding positions include Gly-78, Ile-153, and 174 to 175 (ME). Asp-198 functions as the Proton donor in the catalytic mechanism.

This sequence belongs to the PNP/UDP phosphorylase family. MtnN subfamily.

The enzyme catalyses S-adenosyl-L-homocysteine + H2O = S-(5-deoxy-D-ribos-5-yl)-L-homocysteine + adenine. It catalyses the reaction S-methyl-5'-thioadenosine + H2O = 5-(methylsulfanyl)-D-ribose + adenine. It carries out the reaction 5'-deoxyadenosine + H2O = 5-deoxy-D-ribose + adenine. It functions in the pathway amino-acid biosynthesis; L-methionine biosynthesis via salvage pathway; S-methyl-5-thio-alpha-D-ribose 1-phosphate from S-methyl-5'-thioadenosine (hydrolase route): step 1/2. Catalyzes the irreversible cleavage of the glycosidic bond in both 5'-methylthioadenosine (MTA) and S-adenosylhomocysteine (SAH/AdoHcy) to adenine and the corresponding thioribose, 5'-methylthioribose and S-ribosylhomocysteine, respectively. Also cleaves 5'-deoxyadenosine, a toxic by-product of radical S-adenosylmethionine (SAM) enzymes, into 5-deoxyribose and adenine. In Shewanella halifaxensis (strain HAW-EB4), this protein is 5'-methylthioadenosine/S-adenosylhomocysteine nucleosidase.